Reading from the N-terminus, the 137-residue chain is Nucleoside diphosphate kinase (137 aa).

ATP-binding residues include Lys-9, Phe-57, Arg-85, Thr-91, Arg-102, and Asn-112. Catalysis depends on His-115, which acts as the Pros-phosphohistidine intermediate.

This sequence belongs to the NDK family. As to quaternary structure, homotetramer. Mg(2+) serves as cofactor.

Its subcellular location is the cytoplasm. It carries out the reaction a 2'-deoxyribonucleoside 5'-diphosphate + ATP = a 2'-deoxyribonucleoside 5'-triphosphate + ADP. The catalysed reaction is a ribonucleoside 5'-diphosphate + ATP = a ribonucleoside 5'-triphosphate + ADP. In terms of biological role, major role in the synthesis of nucleoside triphosphates other than ATP. The ATP gamma phosphate is transferred to the NDP beta phosphate via a ping-pong mechanism, using a phosphorylated active-site intermediate. In Geotalea uraniireducens (strain Rf4) (Geobacter uraniireducens), this protein is Nucleoside diphosphate kinase.